Here is a 438-residue protein sequence, read N- to C-terminus: sn-glycerol-3-phosphate-binding periplasmic protein UgpB (438 aa).

Positions 1–23 (MKPLRYTASALALGLALMANAQA) are cleaved as a signal peptide. Sn-glycerol 3-phosphate is bound by residues tyrosine 65, glutamate 89, serine 144, serine 270, glycine 307, tyrosine 346, and arginine 397.

It belongs to the bacterial solute-binding protein 1 family. The complex is composed of two ATP-binding proteins (UgpC), two transmembrane proteins (UgpA and UgpE) and a solute-binding protein (UgpB).

The protein localises to the periplasm. Its function is as follows. Part of the ABC transporter complex UgpBAEC involved in sn-glycerol-3-phosphate (G3P) import. Binds G3P. The protein is sn-glycerol-3-phosphate-binding periplasmic protein UgpB (ugpB) of Escherichia coli O1:K1 / APEC.